A 130-amino-acid polypeptide reads, in one-letter code: Small ribosomal subunit protein uS9 (130 aa).

Residues 99-110 (KKAGFLTRDPRM) show a composition bias toward basic and acidic residues. Residues 99–130 (KKAGFLTRDPRMKERKKYGLKKARRAPQFSKR) are disordered. Residues 111–130 (KERKKYGLKKARRAPQFSKR) are compositionally biased toward basic residues.

Belongs to the universal ribosomal protein uS9 family.

The sequence is that of Small ribosomal subunit protein uS9 from Clostridium botulinum (strain Eklund 17B / Type B).